Here is a 346-residue protein sequence, read N- to C-terminus: N-acetyl-gamma-glutamyl-phosphate reductase (346 aa).

Cysteine 149 is a catalytic residue.

The protein belongs to the NAGSA dehydrogenase family. Type 1 subfamily.

The protein resides in the cytoplasm. It catalyses the reaction N-acetyl-L-glutamate 5-semialdehyde + phosphate + NADP(+) = N-acetyl-L-glutamyl 5-phosphate + NADPH + H(+). It participates in amino-acid biosynthesis; L-arginine biosynthesis; N(2)-acetyl-L-ornithine from L-glutamate: step 3/4. In terms of biological role, catalyzes the NADPH-dependent reduction of N-acetyl-5-glutamyl phosphate to yield N-acetyl-L-glutamate 5-semialdehyde. This Geobacter metallireducens (strain ATCC 53774 / DSM 7210 / GS-15) protein is N-acetyl-gamma-glutamyl-phosphate reductase.